A 205-amino-acid chain; its full sequence is Holliday junction branch migration complex subunit RuvA (205 aa).

A domain I region spans residues 1 to 65 (MIAKLKGILD…EDRIHLFGFL (65 aa)). The tract at residues 66–144 (DNTEKVAFNM…NINTIANNTS (79 aa)) is domain II. The tract at residues 145–153 (LATLSTDSN) is flexible linker. The interval 154–205 (THDNILSDAITALIALGISRAEATQILSDIYALSPSISVNELVRTALQRRAK) is domain III.

Belongs to the RuvA family. As to quaternary structure, homotetramer. Forms an RuvA(8)-RuvB(12)-Holliday junction (HJ) complex. HJ DNA is sandwiched between 2 RuvA tetramers; dsDNA enters through RuvA and exits via RuvB. An RuvB hexamer assembles on each DNA strand where it exits the tetramer. Each RuvB hexamer is contacted by two RuvA subunits (via domain III) on 2 adjacent RuvB subunits; this complex drives branch migration. In the full resolvosome a probable DNA-RuvA(4)-RuvB(12)-RuvC(2) complex forms which resolves the HJ.

It localises to the cytoplasm. Functionally, the RuvA-RuvB-RuvC complex processes Holliday junction (HJ) DNA during genetic recombination and DNA repair, while the RuvA-RuvB complex plays an important role in the rescue of blocked DNA replication forks via replication fork reversal (RFR). RuvA specifically binds to HJ cruciform DNA, conferring on it an open structure. The RuvB hexamer acts as an ATP-dependent pump, pulling dsDNA into and through the RuvAB complex. HJ branch migration allows RuvC to scan DNA until it finds its consensus sequence, where it cleaves and resolves the cruciform DNA. This Orientia tsutsugamushi (strain Ikeda) (Rickettsia tsutsugamushi) protein is Holliday junction branch migration complex subunit RuvA.